A 533-amino-acid polypeptide reads, in one-letter code: MGSCCSRATSPDSGRGGANGYGYSHQTKPAQTTPSYNHPQPPPPAEVRYTPSAMNPPVVPPVVAPPKPTPDTILGKPYDDVRSVYSLGKELGRGQFGVTYLCTEIASGKQYACKSISKRKLVSKADKEDIRREIQIMQHLSGQQNIVEFRGAYEDKSNVHVVMELCAGGELFDRIIAKGHYSERAAATICRAVVNVVNICHFMGVMHRDLKPENFLLATKEENAMLKATDFGLSVFIEEGKMYRDIVGSAYYVAPEVLRRNYGKEIDVWSAGVILYILLSGVPPFWAETEKGIFDAILQGEIDFESQPWPSISESAKDLVRKMLTQDPKKRITSAQVLQHPWLRDGEASDKPIDSAVLSRMKQFRAMNKLKKMALKVIASNLNEEEIKGLKQMFTNMDTDNSGTITYEELKAGLAKLGSKLSEAEVKQLMEAADVDGNGSIDYVEFITATMHRHKLERDEHLFKAFQYFDKDNSGFITRDELESALIEHEMGDTSTIKDIISEVDTDNDGRINYEEFCAMMRGGGMQQPMRLK.

Composition is skewed to polar residues over residues 1-12 and 24-38; these read MGSCCSRATSPD and SHQT…SYNH. The disordered stretch occupies residues 1-53; it reads MGSCCSRATSPDSGRGGANGYGYSHQTKPAQTTPSYNHPQPPPPAEVRYTPSA. The N-myristoyl glycine moiety is linked to residue Gly-2. In terms of domain architecture, Protein kinase spans 85–343; that stretch reads YSLGKELGRG…SAQVLQHPWL (259 aa). ATP-binding positions include 91–99 and Lys-114; that span reads LGRGQFGVT. Residue Asp-209 is the Proton acceptor of the active site. An autoinhibitory domain region spans residues 348–378; that stretch reads ASDKPIDSAVLSRMKQFRAMNKLKKMALKVI. EF-hand domains are found at residues 385–420, 421–456, 457–492, and 497–527; these read EEIK…LGSK, LSEA…RHKL, ERDE…HEMG, and IKDI…GGMQ. Ca(2+)-binding residues include Asp-398, Asp-400, Ser-402, Thr-404, Glu-409, Asp-434, Asp-436, Asn-438, Ser-440, Glu-445, Asp-470, Asp-472, Ser-474, Glu-481, Asp-505, Asp-507, Asp-509, Arg-511, and Glu-516.

The protein belongs to the protein kinase superfamily. Ser/Thr protein kinase family. CDPK subfamily. Expressed in root tips, leaf veins, mesophyll cells, flower reproductive organs and mature pollen grains.

The protein localises to the membrane. The enzyme catalyses L-seryl-[protein] + ATP = O-phospho-L-seryl-[protein] + ADP + H(+). The catalysed reaction is L-threonyl-[protein] + ATP = O-phospho-L-threonyl-[protein] + ADP + H(+). With respect to regulation, activated by calcium. Autophosphorylation may play an important role in the regulation of the kinase activity. In terms of biological role, may play a role in signal transduction pathways that involve calcium as a second messenger. This chain is Calcium-dependent protein kinase 19, found in Oryza sativa subsp. japonica (Rice).